Here is a 159-residue protein sequence, read N- to C-terminus: Small ribosomal subunit protein uS7 (159 aa).

This sequence belongs to the universal ribosomal protein uS7 family. As to quaternary structure, part of the 30S ribosomal subunit. Contacts proteins S9 and S11.

Its function is as follows. One of the primary rRNA binding proteins, it binds directly to 16S rRNA where it nucleates assembly of the head domain of the 30S subunit. Is located at the subunit interface close to the decoding center, probably blocks exit of the E-site tRNA. The polypeptide is Small ribosomal subunit protein uS7 (Wolbachia sp. subsp. Brugia malayi (strain TRS)).